The following is a 1202-amino-acid chain: Adenine-specific methyltransferase PglX (1202 aa).

It belongs to the methyltransferase superfamily. PglX adenine methyltransferase family.

It catalyses the reaction a 2'-deoxyadenosine in DNA + S-adenosyl-L-methionine = an N(6)-methyl-2'-deoxyadenosine in DNA + S-adenosyl-L-homocysteine + H(+). In terms of biological role, BREX systems (bacteriophage exclusion) provide immunity against bacteriophage. Part of a type 1 BREX system which protects against dsDNA phage. This system allows phage adsorption but prevents phage DNA replication, without degradation of the phage DNA. Methylation of bacterial DNA by this protein guides self/non-self discrimination. Functionally, probably methylates the adenine in the fifth position of the hexamer 5'-ACRCAG-3' in genomic DNA. N(6)-methylated adenine on the fifth position of 5'-ACRCAG-3' is found in the genome; there are 1906 sites in the genomic DNA. This Lacticaseibacillus casei (strain Zhang) (Lactobacillus casei) protein is Adenine-specific methyltransferase PglX.